Reading from the N-terminus, the 99-residue chain is UPF0751 protein BCAH820_B0138 (99 aa).

This sequence belongs to the UPF0751 family.

This Bacillus cereus (strain AH820) protein is UPF0751 protein BCAH820_B0138.